Here is a 60-residue protein sequence, read N- to C-terminus: Large ribosomal subunit protein uL30 (60 aa).

Belongs to the universal ribosomal protein uL30 family. In terms of assembly, part of the 50S ribosomal subunit.

In Streptomyces coelicolor (strain ATCC BAA-471 / A3(2) / M145), this protein is Large ribosomal subunit protein uL30.